A 43-amino-acid chain; its full sequence is MVCKGCGTNCQCSAQKCGDNCACNKDCQCVCKNGPKDQCCSNK.

Met1 is subject to Blocked amino end (Met).

This sequence belongs to the metallothionein superfamily. Type 5 family.

Its function is as follows. This protein binds cations of several transition elements. Thought to be involved in metal ion homeostasis. The polypeptide is Metallothionein-2 (MtnB) (Drosophila melanogaster (Fruit fly)).